Consider the following 400-residue polypeptide: Diphosphomevalonate decarboxylase (400 aa).

(R)-5-diphosphomevalonate is bound by residues 19-22 (YWGK), Arg75, 154-159 (SGSACR), and Thr210. The segment at 381–400 (DGPRTLGPEEALLSPDGLPK) is disordered.

It belongs to the diphosphomevalonate decarboxylase family.

The catalysed reaction is (R)-5-diphosphomevalonate + ATP = isopentenyl diphosphate + ADP + phosphate + CO2. Its pathway is isoprenoid biosynthesis; isopentenyl diphosphate biosynthesis via mevalonate pathway; isopentenyl diphosphate from (R)-mevalonate: step 3/3. Functionally, diphosphomevalonate decarboxylase; part of the second module of ergosterol biosynthesis pathway that includes the middle steps of the pathway. The second module involves the formation of farnesyl diphosphate, which is also an important intermediate in the biosynthesis of ubiquinone, dolichol, heme and prenylated proteins. This module also plays a key role in the biosynthesis of triterpenes such as ganoderic acids (GA), a group of highly oxygenated lanostane-type triterpenoids which are well recognized as a main group of unique bioactive compounds in the medicinal mushroom Ganoderma lucidum. Activity by the mevalonate kinase first converts mevalonate into 5-phosphomevalonate. 5-phosphomevalonate is then further converted to 5-diphosphomevalonate by the phosphomevalonate kinase. The diphosphomevalonate decarboxylase MVD then produces isopentenyl diphosphate. The isopentenyl-diphosphate delta-isomerase then catalyzes the 1,3-allylic rearrangement of the homoallylic substrate isopentenyl (IPP) to its highly electrophilic allylic isomer, dimethylallyl diphosphate (DMAPP). Finally the farnesyl diphosphate synthase FPS catalyzes the sequential condensation of isopentenyl pyrophosphate with dimethylallyl pyrophosphate, and then with the resultant geranylpyrophosphate to the ultimate product farnesyl pyrophosphate. In Ganoderma lucidum (Ling zhi medicinal fungus), this protein is Diphosphomevalonate decarboxylase.